Reading from the N-terminus, the 494-residue chain is GTPase Der (494 aa).

EngA-type G domains follow at residues Pro3–Met166 and Ile206–Thr379. GTP contacts are provided by residues Gly9–Ser16, Asp56–Ile60, Asn118–Asp121, Gly212–Ser219, Asp259–Val263, and Asn324–Asp327. The KH-like domain occupies Thr380–Glu464.

This sequence belongs to the TRAFAC class TrmE-Era-EngA-EngB-Septin-like GTPase superfamily. EngA (Der) GTPase family. As to quaternary structure, associates with the 50S ribosomal subunit.

Its function is as follows. GTPase that plays an essential role in the late steps of ribosome biogenesis. In Vibrio cholerae serotype O1 (strain ATCC 39541 / Classical Ogawa 395 / O395), this protein is GTPase Der.